Here is a 179-residue protein sequence, read N- to C-terminus: NADH dehydrogenase [ubiquinone] 1 beta subcomplex subunit 9 (179 aa).

N-acetylalanine is present on Ala2. A Phosphoserine modification is found at Ser85. The interval 136-162 (EVKQLQEETPPGGPLTEALPPARKEGD) is disordered.

Belongs to the complex I LYR family. In terms of assembly, mammalian complex I is composed of 45 different subunits.

It localises to the mitochondrion inner membrane. In terms of biological role, accessory subunit of the mitochondrial membrane respiratory chain NADH dehydrogenase (Complex I), that is believed to be not involved in catalysis. Complex I functions in the transfer of electrons from NADH to the respiratory chain. The immediate electron acceptor for the enzyme is believed to be ubiquinone. In Pongo abelii (Sumatran orangutan), this protein is NADH dehydrogenase [ubiquinone] 1 beta subcomplex subunit 9 (NDUFB9).